The following is a 467-amino-acid chain: Glutamate--tRNA ligase (467 aa).

Positions 13–23 (PSPTGFLHLGG) match the 'HIGH' region motif. Positions 118-133 (ARGDKPRYDGTWRPEP) are enriched in basic and acidic residues. A disordered region spans residues 118 to 141 (ARGDKPRYDGTWRPEPGKTLPAIP). Residues 245-249 (KLSKR) carry the 'KMSKS' region motif. Lys-248 lines the ATP pocket.

It belongs to the class-I aminoacyl-tRNA synthetase family. Glutamate--tRNA ligase type 1 subfamily. In terms of assembly, monomer.

The protein resides in the cytoplasm. It carries out the reaction tRNA(Glu) + L-glutamate + ATP = L-glutamyl-tRNA(Glu) + AMP + diphosphate. Catalyzes the attachment of glutamate to tRNA(Glu) in a two-step reaction: glutamate is first activated by ATP to form Glu-AMP and then transferred to the acceptor end of tRNA(Glu). The sequence is that of Glutamate--tRNA ligase from Bordetella avium (strain 197N).